The sequence spans 335 residues: Nucleoid-associated protein YejK (335 aa).

Belongs to the YejK family.

Its subcellular location is the cytoplasm. It is found in the nucleoid. The protein is Nucleoid-associated protein YejK of Salmonella arizonae (strain ATCC BAA-731 / CDC346-86 / RSK2980).